A 207-amino-acid polypeptide reads, in one-letter code: Large ribosomal subunit protein uL4 (207 aa).

Positions 48 to 75 (THSVKNRSAVRGGGRKPWRQKGTGRARQ) are disordered. A compositionally biased stretch (basic residues) spans 60-71 (GGRKPWRQKGTG).

The protein belongs to the universal ribosomal protein uL4 family. In terms of assembly, part of the 50S ribosomal subunit.

Functionally, one of the primary rRNA binding proteins, this protein initially binds near the 5'-end of the 23S rRNA. It is important during the early stages of 50S assembly. It makes multiple contacts with different domains of the 23S rRNA in the assembled 50S subunit and ribosome. In terms of biological role, forms part of the polypeptide exit tunnel. This Staphylococcus carnosus (strain TM300) protein is Large ribosomal subunit protein uL4.